We begin with the raw amino-acid sequence, 158 residues long: 6,7-dimethyl-8-ribityllumazine synthase (158 aa).

Residues Phe-23, 57-59 (AFE), and 81-83 (TVI) each bind 5-amino-6-(D-ribitylamino)uracil. 86–87 (GT) lines the (2S)-2-hydroxy-3-oxobutyl phosphate pocket. His-89 (proton donor) is an active-site residue. Phe-114 serves as a coordination point for 5-amino-6-(D-ribitylamino)uracil. Arg-128 serves as a coordination point for (2S)-2-hydroxy-3-oxobutyl phosphate.

This sequence belongs to the DMRL synthase family.

It carries out the reaction (2S)-2-hydroxy-3-oxobutyl phosphate + 5-amino-6-(D-ribitylamino)uracil = 6,7-dimethyl-8-(1-D-ribityl)lumazine + phosphate + 2 H2O + H(+). It functions in the pathway cofactor biosynthesis; riboflavin biosynthesis; riboflavin from 2-hydroxy-3-oxobutyl phosphate and 5-amino-6-(D-ribitylamino)uracil: step 1/2. In terms of biological role, catalyzes the formation of 6,7-dimethyl-8-ribityllumazine by condensation of 5-amino-6-(D-ribitylamino)uracil with 3,4-dihydroxy-2-butanone 4-phosphate. This is the penultimate step in the biosynthesis of riboflavin. The sequence is that of 6,7-dimethyl-8-ribityllumazine synthase from Desulforudis audaxviator (strain MP104C).